A 478-amino-acid chain; its full sequence is Lipoprotein lipase (478 aa).

The first 27 residues, 1–27, serve as a signal peptide directing secretion; the sequence is MESKVLLLLALSVWLQSLTVSRGGLVA. The segment at 35-56 is interaction with GPIHBP1; sequence KDFRDIESKFALRTPEDTAEDT. A disulfide bridge links Cys57 with Cys70. An N-linked (GlcNAc...) asparagine glycan is attached at Asn73. Tyr124 carries the post-translational modification 3'-nitrotyrosine. Ser162 (nucleophile) is an active-site residue. Asp186 functions as the Charge relay system in the catalytic mechanism. Residue Tyr194 is modified to 3'-nitrotyrosine. 4 residues coordinate Ca(2+): Ala197, Arg200, Ser202, and Asp205. Cys246 and Cys269 are oxidised to a cystine. The segment at 246–269 is essential for determining substrate specificity; sequence CNIGEALRVIAERGLGDVDQLVKC. Residue His271 is the Charge relay system of the active site. Intrachain disulfides connect Cys294-Cys313 and Cys305-Cys308. The 124-residue stretch at 344 to 467 folds into the PLAT domain; it reads FHYQVKIHFS…KGKSPVIFVK (124 aa). Tyr346 carries the post-translational modification 3'-nitrotyrosine. A glycan (N-linked (GlcNAc...) asparagine) is linked at Asn389. The interval 420–424 is important for interaction with lipoprotein particles; sequence WSNWW. Residues 433–437 are important for heparin binding; that stretch reads KIRVK. Residues 446 to 470 form an interaction with GPIHBP1 region; sequence IFCSREKMSYLQKGKSPVIFVKCHD. A disulfide bond links Cys448 and Cys468.

Belongs to the AB hydrolase superfamily. Lipase family. As to quaternary structure, homodimer. Interacts with GPIHBP1 with 1:1 stoichiometry. Interacts with APOC2; the interaction activates LPL activity in the presence of lipids. Interaction with heparan sulfate proteoglycans is required to protect LPL against loss of activity. Associates with lipoprotein particles in blood plasma. Interacts with LMF1 and SEL1L; interaction with SEL1L is required to prevent aggregation of newly synthesized LPL in the endoplasmic reticulum (ER), and for normal export of LPL from the ER to the extracellular space. Interacts with SORL1; SORL1 acts as a sorting receptor, promoting LPL localization to endosomes and later to lysosomes, leading to degradation of newly synthesized LPL. In terms of processing, tyrosine nitration after lipopolysaccharide (LPS) challenge down-regulates the lipase activity.

It is found in the cell membrane. It localises to the secreted. The protein localises to the extracellular space. Its subcellular location is the extracellular matrix. The enzyme catalyses a triacylglycerol + H2O = a diacylglycerol + a fatty acid + H(+). The catalysed reaction is a 1,2-diacyl-sn-glycero-3-phosphocholine + H2O = a 2-acyl-sn-glycero-3-phosphocholine + a fatty acid + H(+). It catalyses the reaction 1,2,3-tri-(9Z-octadecenoyl)-glycerol + H2O = di-(9Z)-octadecenoylglycerol + (9Z)-octadecenoate + H(+). It carries out the reaction 1,2-di-(9Z-octadecenoyl)-sn-glycero-3-phosphocholine + H2O = (9Z-octadecenoyl)-sn-glycero-3-phosphocholine + (9Z)-octadecenoate + H(+). The enzyme catalyses 1,2,3-tributanoylglycerol + H2O = dibutanoylglycerol + butanoate + H(+). The catalysed reaction is 1,2-dihexadecanoyl-sn-glycero-3-phosphocholine + H2O = hexadecanoyl-sn-glycero-3-phosphocholine + hexadecanoate + H(+). Its activity is regulated as follows. The apolipoprotein APOC2 acts as a coactivator of LPL activity. Ca(2+) binding promotes protein stability and formation of the active homodimer. Interaction with GPIHBP1 protects LPL against inactivation by ANGPTL4. In terms of biological role, key enzyme in triglyceride metabolism. Catalyzes the hydrolysis of triglycerides from circulating chylomicrons and very low density lipoproteins (VLDL), and thereby plays an important role in lipid clearance from the blood stream, lipid utilization and storage. Although it has both phospholipase and triglyceride lipase activities it is primarily a triglyceride lipase with low but detectable phospholipase activity. Mediates margination of triglyceride-rich lipoprotein particles in capillaries. Recruited to its site of action on the luminal surface of vascular endothelium by binding to GPIHBP1 and cell surface heparan sulfate proteoglycans. This Ovis aries (Sheep) protein is Lipoprotein lipase (LPL).